Here is a 259-residue protein sequence, read N- to C-terminus: Ribosomal RNA small subunit methyltransferase A (259 aa).

S-adenosyl-L-methionine-binding residues include Asn13, Leu15, Gly39, Glu60, Asp84, and Asn101.

Belongs to the class I-like SAM-binding methyltransferase superfamily. rRNA adenine N(6)-methyltransferase family. RsmA subfamily.

It is found in the cytoplasm. It catalyses the reaction adenosine(1518)/adenosine(1519) in 16S rRNA + 4 S-adenosyl-L-methionine = N(6)-dimethyladenosine(1518)/N(6)-dimethyladenosine(1519) in 16S rRNA + 4 S-adenosyl-L-homocysteine + 4 H(+). In terms of biological role, specifically dimethylates two adjacent adenosines (A1518 and A1519) in the loop of a conserved hairpin near the 3'-end of 16S rRNA in the 30S particle. May play a critical role in biogenesis of 30S subunits. This chain is Ribosomal RNA small subunit methyltransferase A, found in Mesomycoplasma hyopneumoniae (strain J / ATCC 25934 / NCTC 10110) (Mycoplasma hyopneumoniae).